We begin with the raw amino-acid sequence, 420 residues long: Serine--tRNA ligase (420 aa).

229 to 231 contributes to the L-serine binding site; the sequence is TAE. 260–262 contacts ATP; that stretch reads RSE. E283 contributes to the L-serine binding site. 347-350 serves as a coordination point for ATP; that stretch reads EISS. Residue S381 participates in L-serine binding.

The protein belongs to the class-II aminoacyl-tRNA synthetase family. Type-1 seryl-tRNA synthetase subfamily. As to quaternary structure, homodimer. The tRNA molecule binds across the dimer.

It localises to the cytoplasm. It catalyses the reaction tRNA(Ser) + L-serine + ATP = L-seryl-tRNA(Ser) + AMP + diphosphate + H(+). The catalysed reaction is tRNA(Sec) + L-serine + ATP = L-seryl-tRNA(Sec) + AMP + diphosphate + H(+). Its pathway is aminoacyl-tRNA biosynthesis; selenocysteinyl-tRNA(Sec) biosynthesis; L-seryl-tRNA(Sec) from L-serine and tRNA(Sec): step 1/1. Its function is as follows. Catalyzes the attachment of serine to tRNA(Ser). Is also able to aminoacylate tRNA(Sec) with serine, to form the misacylated tRNA L-seryl-tRNA(Sec), which will be further converted into selenocysteinyl-tRNA(Sec). The sequence is that of Serine--tRNA ligase from Gluconobacter oxydans (strain 621H) (Gluconobacter suboxydans).